The sequence spans 23 residues: Aurein-4.1 (23 aa).

Belongs to the frog skin active peptide (FSAP) family. Aurein subfamily. As to expression, expressed by the skin dorsal glands.

It localises to the secreted. Its function is as follows. Has no antimicrobial or anticancer activity. In Ranoidea aurea (Green and golden bell frog), this protein is Aurein-4.1.